The following is a 381-amino-acid chain: L-lactate dehydrogenase (381 aa).

The FMN hydroxy acid dehydrogenase domain occupies 1 to 380 (MIISSASDYR…KPEALVDLSK (380 aa)). Y24 provides a ligand contact to substrate. The FMN site is built by S106 and Q127. Y129 contacts substrate. FMN is bound at residue T155. R164 is a substrate binding site. K251 serves as a coordination point for FMN. The Proton acceptor role is filled by H275. A substrate-binding site is contributed by R278. Position 306–330 (306–330 (DSGIRNGLDIVRMLALGADATMLGR)) interacts with FMN.

This sequence belongs to the FMN-dependent alpha-hydroxy acid dehydrogenase family. The cofactor is FMN.

The protein localises to the cell inner membrane. It carries out the reaction (S)-lactate + A = pyruvate + AH2. Functionally, catalyzes the conversion of L-lactate to pyruvate. Is coupled to the respiratory chain. This chain is L-lactate dehydrogenase, found in Haemophilus influenzae (strain 86-028NP).